We begin with the raw amino-acid sequence, 661 residues long: UvrABC system protein B (661 aa).

A Helicase ATP-binding domain is found at 25–182 (AGLNSKKRSQ…NDLINLQYKR (158 aa)). Residue 38–45 (GITGSGKT) coordinates ATP. The Beta-hairpin motif lies at 91 to 114 (YYDYYQPEAYIARTDTFIEKDSSI). The Helicase C-terminal domain maps to 430 to 592 (QVEDLISEIQ…IIPKTINRAI (163 aa)). Positions 621-656 (KANINKLNKEMLKAASNLEFEQAAKLRDQLKTLEAA) constitute a UVR domain.

Belongs to the UvrB family. As to quaternary structure, forms a heterotetramer with UvrA during the search for lesions. Interacts with UvrC in an incision complex.

The protein localises to the cytoplasm. The UvrABC repair system catalyzes the recognition and processing of DNA lesions. A damage recognition complex composed of 2 UvrA and 2 UvrB subunits scans DNA for abnormalities. Upon binding of the UvrA(2)B(2) complex to a putative damaged site, the DNA wraps around one UvrB monomer. DNA wrap is dependent on ATP binding by UvrB and probably causes local melting of the DNA helix, facilitating insertion of UvrB beta-hairpin between the DNA strands. Then UvrB probes one DNA strand for the presence of a lesion. If a lesion is found the UvrA subunits dissociate and the UvrB-DNA preincision complex is formed. This complex is subsequently bound by UvrC and the second UvrB is released. If no lesion is found, the DNA wraps around the other UvrB subunit that will check the other stand for damage. This Rickettsia akari (strain Hartford) protein is UvrABC system protein B.